Reading from the N-terminus, the 322-residue chain is Mas-related G-protein coupled receptor member B5 (322 aa).

Residues 1-34 are Extracellular-facing; the sequence is MGLTTPAWNINNTVVNGSNNTEHFSCVSKFNTLN. Residues Asn-11, Asn-16, and Asn-19 are each glycosylated (N-linked (GlcNAc...) asparagine). Residues 35–55 traverse the membrane as a helical segment; it reads FLTVIIAMFGLAGNAIVLWLL. Residues 56-70 lie on the Cytoplasmic side of the membrane; sequence AFHLPRNAFSVYVCN. A helical membrane pass occupies residues 71-91; that stretch reads LACADFLQLCTQILGSLECFL. Residues 92-98 are Extracellular-facing; it reads QLNRRHT. A helical transmembrane segment spans residues 99 to 119; that stretch reads FFLTVVFMFAYLAGLCMIAAI. Topologically, residues 120-147 are cytoplasmic; the sequence is SVERSLSVMWPIWYHCQRPRHTSSIMCA. A helical transmembrane segment spans residues 148–168; sequence LLWAFCLLLNFLLGEGCGLLF. Over 169-172 the chain is Extracellular; it reads SDPK. Residues 173–193 traverse the membrane as a helical segment; sequence YYFCITCALITTALIILLTVV. At 194–216 the chain is on the cytoplasmic side; sequence PSVSSLALLVKMICGSHRIPVTR. Residues 217–237 traverse the membrane as a helical segment; sequence FYVTIALTLVVFIFLGLPFGI. The Extracellular portion of the chain corresponds to 238–260; the sequence is YSSFLIMFKEFQSIFSYHVLEVT. The helical transmembrane segment at 261–281 threads the bilayer; sequence IFLSCVNSCANPIIYFLVGSI. The Cytoplasmic segment spans residues 282 to 322; it reads RQHRLQWQSLKLLLQRAMQDTPEEDSGERVPSQRSGELESV. The disordered stretch occupies residues 302–322; it reads TPEEDSGERVPSQRSGELESV.

Belongs to the G-protein coupled receptor 1 family. Mas subfamily.

It is found in the membrane. Its function is as follows. Orphan receptor. Probably involved in the function of nociceptive neurons. May regulate nociceptor function and/or development, including the sensation or modulation of pain. The protein is Mas-related G-protein coupled receptor member B5 (Mrgprb5) of Mus musculus (Mouse).